The following is a 353-amino-acid chain: Protein RecA (353 aa).

Residue 65 to 72 (GPESSGKT) participates in ATP binding.

Belongs to the RecA family.

It localises to the cytoplasm. In terms of biological role, can catalyze the hydrolysis of ATP in the presence of single-stranded DNA, the ATP-dependent uptake of single-stranded DNA by duplex DNA, and the ATP-dependent hybridization of homologous single-stranded DNAs. It interacts with LexA causing its activation and leading to its autocatalytic cleavage. This chain is Protein RecA, found in Aeromonas salmonicida (strain A449).